Reading from the N-terminus, the 31-residue chain is uncharacterized protein (31 aa).

This is an uncharacterized protein from Saccharomyces cerevisiae (strain ATCC 204508 / S288c) (Baker's yeast).